The primary structure comprises 377 residues: MGEIQTLNAKQQAGKPVIRLSGISKSFDGKEIIGNLNLDVNHGEFLTILGPSGCGKTTVLRMIAGFETADNGQIVLDDQDVTQVPAEHRHVNTVFQSYALFPHMTVFDNVAFGLRMQKTPAAEIEPRVMEALRMVRLEKMAQRKPHQLSGGQQQRIAIARAVVNKPKVLLLDESLSALDYKLRKQMQIELKQLQRQLGITFIFVTHDQEEALSMSDRIIVMRDGVIEQDGSPREIYEEPKNLFVARFIGEINVFNATMLERIDEKRIRAEIEGVESVVYYDKEAQAGDKLQVLLRPEDLRIEEIKESEEKGIVGHVTERTYKGMTLDSVVQLDSGMRVMVSEFFNEDDPDVDHSLGQKVAITWVESWEVVLNDKQED.

In terms of domain architecture, ABC transporter spans 18–248; sequence IRLSGISKSF…PKNLFVARFI (231 aa). Residue 50 to 57 coordinates ATP; the sequence is GPSGCGKT.

It belongs to the ABC transporter superfamily. Spermidine/putrescine importer (TC 3.A.1.11.1) family. As to quaternary structure, the complex is composed of two ATP-binding proteins (PotA), two transmembrane proteins (PotB and PotC) and a solute-binding protein (PotD).

It is found in the cell inner membrane. The enzyme catalyses ATP + H2O + polyamine-[polyamine-binding protein]Side 1 = ADP + phosphate + polyamineSide 2 + [polyamine-binding protein]Side 1.. Functionally, part of the ABC transporter complex PotABCD involved in spermidine/putrescine import. Responsible for energy coupling to the transport system. This Vibrio parahaemolyticus serotype O3:K6 (strain RIMD 2210633) protein is Spermidine/putrescine import ATP-binding protein PotA.